Here is a 198-residue protein sequence, read N- to C-terminus: Protein FAM219B (198 aa).

2 disordered regions span residues 1 to 58 (MATA…KRGP) and 83 to 146 (RRKG…EQVN). Serine 14, serine 91, serine 125, and serine 127 each carry phosphoserine. Residues 134-146 (RYSSGYSSAEQVN) are compositionally biased toward polar residues.

It belongs to the FAM219 family.

This Homo sapiens (Human) protein is Protein FAM219B (FAM219B).